The chain runs to 507 residues: Trigger factor (507 aa).

Positions 162–243 constitute a PPIase FKBP-type domain; the sequence is GDFVSLDLSA…VRGVKEKELP (82 aa). The disordered stretch occupies residues 434–507; it reads NLPRRPSGEA…DSELPASETK (74 aa). Positions 442 to 460 are enriched in acidic residues; it reads EAEDDVRDISDELDAEELE. Low complexity predominate over residues 461–488; the sequence is VPAAAPSAEVTAAAGDEATATATATDAD.

The protein belongs to the FKBP-type PPIase family. Tig subfamily.

Its subcellular location is the cytoplasm. The enzyme catalyses [protein]-peptidylproline (omega=180) = [protein]-peptidylproline (omega=0). Its function is as follows. Involved in protein export. Acts as a chaperone by maintaining the newly synthesized protein in an open conformation. Functions as a peptidyl-prolyl cis-trans isomerase. This Parafrankia sp. (strain EAN1pec) protein is Trigger factor.